A 216-amino-acid chain; its full sequence is Somatotropin (216 aa).

The signal sequence occupies residues 1 to 26 (MATGSQTSWLLTFTLLCLPWPQEAGA). Zn(2+) is bound at residue histidine 45. Cysteine 78 and cysteine 189 are oxidised to a cystine. Serine 131 bears the Phosphoserine mark. Zn(2+) is bound at residue glutamate 198. Cysteine 206 and cysteine 214 are oxidised to a cystine.

The protein belongs to the somatotropin/prolactin family.

It is found in the secreted. Plays an important role in growth control. Its major role in stimulating body growth is to stimulate the liver and other tissues to secrete IGF1. It stimulates both the differentiation and proliferation of myoblasts. It also stimulates amino acid uptake and protein synthesis in muscle and other tissues. This Spalax ehrenbergi (Middle East blind mole rat) protein is Somatotropin (GH1).